The sequence spans 254 residues: HLA class II histocompatibility antigen, DQ alpha 1 chain (254 aa).

Positions 1-23 (MILNKALMLGALALTTVMSPCGG) are cleaved as a signal peptide. Residues 24–119 (EDIVADHVAS…EVPEVTVFSK (96 aa)) form an alpha-1 region. Residues 24 to 216 (EDIVADHVAS…IPAPMSELTE (193 aa)) lie on the Extracellular side of the membrane. N-linked (GlcNAc...) asparagine glycans are attached at residues asparagine 103 and asparagine 143. The Ig-like C1-type domain maps to 112 to 204 (PEVTVFSKSP…LDKPLLKHWE (93 aa)). Positions 120–203 (SPVTLGQPNI…GLDKPLLKHW (84 aa)) are alpha-2. A disulfide bridge connects residues cysteine 132 and cysteine 188. Residues 204 to 216 (EPEIPAPMSELTE) form a connecting peptide region. The helical transmembrane segment at 217–239 (TVVCALGLSVGLVGIVVGTVFII) threads the bilayer. Residues 240–254 (RGLRSVGASRHQGPL) are Cytoplasmic-facing.

This sequence belongs to the MHC class II family. As to quaternary structure, heterodimer of an alpha and a beta subunit; also referred as MHC class II molecule. In the endoplasmic reticulum (ER) it forms a heterononamer; 3 MHC class II molecules bind to a CD74 homotrimer (also known as invariant chain or HLA class II histocompatibility antigen gamma chain). In the endosomal/lysosomal system; CD74 undergoes sequential degradation by various proteases; leaving a small fragment termed CLIP on each MHC class II molecule. MHC class II molecule interacts with HLA_DM, and HLA_DO in B-cells, in order to release CLIP and facilitate the binding of antigenic peptides.

It localises to the cell membrane. It is found in the endoplasmic reticulum membrane. Its subcellular location is the golgi apparatus. The protein localises to the trans-Golgi network membrane. The protein resides in the endosome membrane. It localises to the lysosome membrane. Functionally, binds peptides derived from antigens that access the endocytic route of antigen presenting cells (APC) and presents them on the cell surface for recognition by the CD4 T-cells. The peptide binding cleft accommodates peptides of 10-30 residues. The peptides presented by MHC class II molecules are generated mostly by degradation of proteins that access the endocytic route, where they are processed by lysosomal proteases and other hydrolases. Exogenous antigens that have been endocytosed by the APC are thus readily available for presentation via MHC II molecules, and for this reason this antigen presentation pathway is usually referred to as exogenous. As membrane proteins on their way to degradation in lysosomes as part of their normal turn-over are also contained in the endosomal/lysosomal compartments, exogenous antigens must compete with those derived from endogenous components. Autophagy is also a source of endogenous peptides, autophagosomes constitutively fuse with MHC class II loading compartments. In addition to APCs, other cells of the gastrointestinal tract, such as epithelial cells, express MHC class II molecules and CD74 and act as APCs, which is an unusual trait of the GI tract. To produce a MHC class II molecule that presents an antigen, three MHC class II molecules (heterodimers of an alpha and a beta chain) associate with a CD74 trimer in the ER to form a heterononamer. Soon after the entry of this complex into the endosomal/lysosomal system where antigen processing occurs, CD74 undergoes a sequential degradation by various proteases, including CTSS and CTSL, leaving a small fragment termed CLIP (class-II-associated invariant chain peptide). The removal of CLIP is facilitated by HLA-DM via direct binding to the alpha-beta-CLIP complex so that CLIP is released. HLA-DM stabilizes MHC class II molecules until primary high affinity antigenic peptides are bound. The MHC II molecule bound to a peptide is then transported to the cell membrane surface. In B-cells, the interaction between HLA-DM and MHC class II molecules is regulated by HLA-DO. Primary dendritic cells (DCs) also to express HLA-DO. Lysosomal microenvironment has been implicated in the regulation of antigen loading into MHC II molecules, increased acidification produces increased proteolysis and efficient peptide loading. In Homo sapiens (Human), this protein is HLA class II histocompatibility antigen, DQ alpha 1 chain (HLA-DQA1).